The sequence spans 459 residues: Glutamate--tRNA ligase 2 (459 aa).

The 'HIGH' region signature appears at 8 to 18 (PSPTGYLHIGG). A 'KMSKS' region motif is present at residues 237 to 241 (KLSKR). Residue Lys-240 coordinates ATP.

It belongs to the class-I aminoacyl-tRNA synthetase family. Glutamate--tRNA ligase type 1 subfamily. As to quaternary structure, monomer.

The protein resides in the cytoplasm. The enzyme catalyses tRNA(Glu) + L-glutamate + ATP = L-glutamyl-tRNA(Glu) + AMP + diphosphate. Catalyzes the attachment of glutamate to tRNA(Glu) in a two-step reaction: glutamate is first activated by ATP to form Glu-AMP and then transferred to the acceptor end of tRNA(Glu). The polypeptide is Glutamate--tRNA ligase 2 (Campylobacter concisus (strain 13826)).